Consider the following 314-residue polypeptide: L-lactate dehydrogenase 1 (314 aa).

Residues Val16, Asp37, Lys42, Tyr68, and 82 to 83 (GL) each bind NAD(+). Residues Gln85, Arg91, and 123–126 (NPVD) each bind substrate. Residues 121–123 (ATN) and Ser146 contribute to the NAD(+) site. Position 151 to 154 (151 to 154 (DSAR)) interacts with substrate. 2 residues coordinate beta-D-fructose 1,6-bisphosphate: Arg156 and His171. His178 acts as the Proton acceptor in catalysis. Residue Tyr223 is modified to Phosphotyrosine. Thr232 serves as a coordination point for substrate.

The protein belongs to the LDH/MDH superfamily. LDH family. In terms of assembly, homotetramer.

The protein localises to the cytoplasm. The enzyme catalyses (S)-lactate + NAD(+) = pyruvate + NADH + H(+). It functions in the pathway fermentation; pyruvate fermentation to lactate; (S)-lactate from pyruvate: step 1/1. Its activity is regulated as follows. Allosterically activated by fructose 1,6-bisphosphate (FBP). Its function is as follows. Catalyzes the conversion of lactate to pyruvate. In Bacillus anthracis, this protein is L-lactate dehydrogenase 1.